The chain runs to 754 residues: Fibronectin type III domain-containing protein 1 (754 aa).

The signal sequence occupies residues 1–19 (MKSWISISFLCMLFPLSNG). 3 disordered regions span residues 40 to 61 (SLQGTAPTSQYPQGGTQISQGG), 85 to 106 (AQISQGGGQGISQGATQGTQFS), and 130 to 163 (AQHSQAGAQGSQFPQSAAHTAQHHQGTAQPAQSG). The segment covering 130-161 (AQHSQAGAQGSQFPQSAAHTAQHHQGTAQPAQ) has biased composition (low complexity). Fibronectin type-III domains follow at residues 250–355 (PPQS…TPDL), 359–449 (APLN…TDKF), 453–545 (APRN…TKMD), 549–642 (EPMS…LPKP), and 645–742 (LVPN…SFPG). The disordered stretch occupies residues 731–754 (SNLSSQQFSFPGQQVGQQQSNPWI).

As to expression, prismatic layer of shell (at protein level). Expressed primarily in the mantle with highest level in the outer epithelium of the mantle edge and lower level in the mantle pallium.

The protein localises to the secreted. This chain is Fibronectin type III domain-containing protein 1, found in Margaritifera margaritifera (Freshwater pearl mussel).